Here is a 344-residue protein sequence, read N- to C-terminus: Dihydroorotate dehydrogenase (quinone) (344 aa).

Residues 64–68 (AGLDK) and Thr-88 each bind FMN. Lys-68 serves as a coordination point for substrate. Position 113–117 (113–117 (NRMGF)) interacts with substrate. FMN-binding residues include Asn-144 and Asn-177. Asn-177 provides a ligand contact to substrate. Ser-180 acts as the Nucleophile in catalysis. Position 182 (Asn-182) interacts with substrate. FMN-binding residues include Lys-222 and Thr-250. Residue 251–252 (NT) coordinates substrate. FMN-binding positions include Gly-273, Gly-302, and 323–324 (YS).

This sequence belongs to the dihydroorotate dehydrogenase family. Type 2 subfamily. As to quaternary structure, monomer. The cofactor is FMN.

It is found in the cell membrane. It carries out the reaction (S)-dihydroorotate + a quinone = orotate + a quinol. The protein operates within pyrimidine metabolism; UMP biosynthesis via de novo pathway; orotate from (S)-dihydroorotate (quinone route): step 1/1. In terms of biological role, catalyzes the conversion of dihydroorotate to orotate with quinone as electron acceptor. The polypeptide is Dihydroorotate dehydrogenase (quinone) (Polynucleobacter necessarius subsp. necessarius (strain STIR1)).